The following is a 93-amino-acid chain: MAHKKAGGSSRNGRDSAGRRLGVKKFGGESVIPGNIIIRQRGTKWHPGRNVGIGKDHTIFAKSEGVVEFRNGKNGRSFVSVVVPAEMPAKAAD.

The segment at 1–22 is disordered; the sequence is MAHKKAGGSSRNGRDSAGRRLG.

This sequence belongs to the bacterial ribosomal protein bL27 family.

The polypeptide is Large ribosomal subunit protein bL27 (Parvibaculum lavamentivorans (strain DS-1 / DSM 13023 / NCIMB 13966)).